A 227-amino-acid chain; its full sequence is Ornithine decarboxylase antizyme 1 (227 aa).

The tract at residues 20 to 50 is disordered; sequence EGDKPSATVHATRTMPLLSLHSRGGRSSESS. A compositionally biased stretch (low complexity) spans 36–50; sequence LLSLHSRGGRSSESS.

This sequence belongs to the ODC antizyme family. In terms of assembly, interacts with ODC1 and thereby sterically blocks ODC homodimerization. Forms a ternary complex with PSMB4 and OAZ1 before PSMB4 is incorporated into the 20S proteasome. Interacts with AZIN2; this interaction disrupts the interaction between the antizyme and ODC1. Interacts with FAM171A1.

In terms of biological role, ornithine decarboxylase (ODC) antizyme protein that negatively regulates ODC activity and intracellular polyamine biosynthesis and uptake in response to increased intracellular polyamine levels. Binds to ODC monomers, inhibiting the assembly of the functional ODC homodimer, and targets the monomers for ubiquitin-independent proteolytic destruction by the 26S proteasome. Triggers ODC degradation by inducing the exposure of a cryptic proteasome-interacting surface of ODC. Stabilizes AZIN2 by interfering with its ubiquitination. Also inhibits cellular uptake of polyamines by inactivating the polyamine uptake transporter. SMAD1/OAZ1/PSMB4 complex mediates the degradation of the CREBBP/EP300 repressor SNIP1. Involved in the translocation of AZIN2 from ER-Golgi intermediate compartment (ERGIC) to the cytosol. This Bos taurus (Bovine) protein is Ornithine decarboxylase antizyme 1 (OAZ1).